A 105-amino-acid chain; its full sequence is uncharacterized protein (105 aa).

This is an uncharacterized protein from Saccharomyces cerevisiae (strain ATCC 204508 / S288c) (Baker's yeast).